The primary structure comprises 568 residues: Estrogen receptor beta (568 aa).

Residues 1–177 (MHQQSPVDDV…SLRGKADMHY (177 aa)) form a modulating region. NR C4-type zinc fingers lie at residues 178 to 198 (CAVC…CEGC) and 214 to 238 (CPAT…LRKC). A DNA-binding region (nuclear receptor) is located at residues 178–243 (CAVCSDYASG…RLRKCYEVGM (66 aa)). Residues 300–536 (TPEELIARIM…DLLLEMLDAH (237 aa)) enclose the NR LBD domain.

This sequence belongs to the nuclear hormone receptor family. NR3 subfamily. Binds DNA as a homodimer. Can form a heterodimer with ER-alpha.

The protein resides in the nucleus. Functionally, binds estrogens with an affinity similar to that of ER-alpha, and activates expression of reporter genes containing estrogen response elements (ERE) in an estrogen-dependent manner. In Oncorhynchus mykiss (Rainbow trout), this protein is Estrogen receptor beta (esr2).